Consider the following 326-residue polypeptide: Chitinase 12 (326 aa).

A signal peptide spans 1-21 (MRALAVVAMVATAFLAAAVHA). In terms of domain architecture, Chitin-binding type-1 spans 22–62 (EQCGSQAGGAVCPNCLCCSQFGWCGSTSDYCGAGCQSQCSA). Intrachain disulfides connect C24/C39, C33/C45, C36/C65, C38/C52, C56/C60, C102/C165, C179/C187, and C286/C318. The Proton donor role is filled by E147.

Belongs to the glycosyl hydrolase 19 family. Chitinase class I subfamily. As to expression, expressed in meristems and at lower levels in roots and sheaths.

The enzyme catalyses Random endo-hydrolysis of N-acetyl-beta-D-glucosaminide (1-&gt;4)-beta-linkages in chitin and chitodextrins.. In terms of biological role, hydrolyzes chitin and plays a role in defense against fungal pathogens containing chitin. Its overexpression confers enhanced resistance to sheath blight pathogen (R.solani). In Oryza sativa subsp. japonica (Rice), this protein is Chitinase 12 (Cht12).